A 57-amino-acid chain; its full sequence is uncharacterized protein (57 aa).

Residues 12–34 form a helical membrane-spanning segment; sequence VIAVLSLFVFAVAVFFVGMALLT.

Its subcellular location is the membrane. This is an uncharacterized protein from Pasteurella multocida (strain Pm70).